A 1911-amino-acid polypeptide reads, in one-letter code: MTSQEKTEEYPFADIFDEDETERNFLLSKPVCFVVFGKPGVGKTTLARYITQAWKCIRVEALPILEEQIAAETESGVMLQSMLISGQSIPDELVIKLMLEKLNSPEVCHFGYIITEIPSLSQDAMTTLQQIELIKNLNLKPDVIINIKCPDYDLCQRISGQRQHNNTGYIYSRDQWDPEVIENHRKKKKEAQKDGKGEEEEEEEEQEEEEAFIAEMQMVAEILHHLVQRPEDYLENVENIVKLYKETILQTLEEVMAEHNPQYLIELNGNKPAEELFMIVMDRLKYLNLKRAAILTKLQGAEEEINDTMENDELFRTLASYKLIAPRYRWQRSKWGRTCPVNLKDGNIYSGLPDYSVSFLGKIYCLSSEEALKPFLLNPRPYLLPPMPGPPCKVFILGPQYSGKTTLCNMLAENYKGKVVDYAQLVQPRFDKARETLVENTIAEATAAAIKVVKEKLLRELQARKQAETALREFQRQYEKMEFGVFPMEATHSSIDEEGYIQGSQRDRGSSLVDTEEAKTKSENVLHDQAAKVDKDDGKETGETFTFKRHSQDASQDVKLYSDTAPTEDLIEEVTADHPEVVTMIEETIKMSQDINFEQPYEKHAEILQEVLGEVMEENKDRFPGAPKYGGWIVDNCPIVKELWMALIKKGIIPDLVIYLSDTENNGKCLFNRIYLQKKSEIDSKILERLLEELQKKKKEEEEARKATEEELRLEEENRRLLELMKVKAKEAEETDNEDEEEIEGDELEVHEEPEASHDTRGSWLPEEFEASEVPETEPEAVSEPIEETTVETEIPKGSKEGLEIEKLSETVVLPEFPEDSYPDVPEMEPFKEKIGSFIILWKQLEATISEAYIKILNLEIADRTPQELLQKVVETMEKPFQYTAWELTGEDYEEETEDYQTEAEVDEELEEEEEEEGEDKMKERKRHLGDTKHFCPVVLKENFILQPGNTEEAAKYREKIYYFSSAEAKEKFLEHPEDYVAHEEPLKAPPLRICLVGPQGSGKTMCGRQLAEKLNIFHIQFEEVLQEKLLLKTEKKVGPEFEEDSENEQAAKQELEELAIQANVKVEEENTKKQLPEVQLTEEEEVIKSSLMENEPLPPEILEVILSEWWLKEPIRSTGFILDGFPRYPEEAQFLGDRGFFPDAAVFIQVDDQDIFDRLLPAQIEKWKLKQKKKLERKKLIKDMKAKIRVDTIAKRRAELILERDKKRRENVVRDDEEISEEELEEDNDDIENILEDEFPKDEEEMSGEEDEEQETDAIERLRGELGEKFEADTHNLQIIQDELERYLIPIISINGARRNHIVQYTLNMKLKPLVENRASIFEKCHPIPAPLAQKMLTFTYKYISSFGYWDPVKLSEGETIKPVENAENPIYPVIHRQYIYFLSSKETKEKFMKNPIKYIRQPKPKPTVPIRIIIVGPPKSGKTTVAKKITSEYGLKHLSIGGALRYVLNNHPETELALMLNWHLHKGMTAPDELAIQALELSLMESVCNTAGVVIDGYPVTKHQMNLLEARSIIPMVIFELSVPSKEIFKRLLLEKENEQRLPYPLHNSAQIVAVNNVKYRKNIGEIRQYYQEQHQNWYVIDGFHSKWWVWNEVIKNVQMVNKYMQTYLERIKAGKAACIDKLCITPQELLSRLGEFEQFCPVSLAESQELFDCSATDSLEFAAEFRGHYYKMSSQEKLNKFLENPELYVPPLAPHPLPSADMIPKRLTLSELKSRFPKCAELQGYCPVTYKDGNQRYEALVPGSINYALEYHNRIYICENKEKLQKFLRSPLKYWEQKLPHKLPPLREPILLTSLPLPGYLEQGIATSLIKAMNAAGCLKPKFPFLSIRRSALLYIALHLKAFNPKGSEYTRKKYKKKMEQFMESCELITYLGAKMTRKYKEPQFRAIDFDHKLKTFLSLRNIDPING.

The adenylate kinase 1 stretch occupies residues 31–285 (VCFVVFGKPG…LFMIVMDRLK (255 aa)). An ATP-binding site is contributed by 40–45 (GVGKTT). Positions 60-89 (EALPILEEQIAAETESGVMLQSMLISGQSI) are NMP 1. AMP-binding positions include 87 to 89 (QSI) and 116 to 119 (EIPS). The interval 160-205 (GQRQHNNTGYIYSRDQWDPEVIENHRKKKKEAQKDGKGEEEEEEEE) is LID 1. A disordered region spans residues 185 to 210 (RKKKKEAQKDGKGEEEEEEEEQEEEE). The segment covering 197–210 (GEEEEEEEEQEEEE) has biased composition (acidic residues). Residue arginine 229 participates in AMP binding. Coiled coils occupy residues 443 to 485 (AEAT…EFGV) and 676 to 711 (LQKK…TEEE). Disordered stretches follow at residues 728-796 (KAKE…TEIP) and 892-926 (DYEE…KERK). Residues 733-750 (EETDNEDEEEIEGDELEV) show a composition bias toward acidic residues. Residues 751-761 (HEEPEASHDTR) show a composition bias toward basic and acidic residues. 2 stretches are compositionally biased toward acidic residues: residues 767–791 (EEFE…ETTV) and 892–919 (DYEE…EEGE). 2 adenylate kinase regions span residues 992–1203 (LRIC…ELIL) and 1412–1601 (IRII…KNVQ). 1001–1006 (GSGKTM) is an ATP binding site. The segment at 1021 to 1052 (QFEEVLQEKLLLKTEKKVGPEFEEDSENEQAA) is NMP 2. Residues 1050-1052 (QAA) and 1079-1082 (VQLT) each bind AMP. The LID 2 stretch occupies residues 1124 to 1144 (DGFPRYPEEAQFLGDRGFFPD). 1421-1426 (KSGKTT) serves as a coordination point for ATP. Residues 1441–1472 (SIGGALRYVLNNHPETELALMLNWHLHKGMTA) are NMP 3. AMP-binding positions include arginine 1447, 1470–1472 (MTA), 1499–1502 (GYPV), glutamine 1506, and arginine 1543. Residues 1536 to 1550 (LEKENEQRLPYPLHN) are LID 3.

This sequence belongs to the adenylate kinase family.

The protein localises to the cytoplasm. It localises to the nucleus. It is found in the cell projection. Its subcellular location is the cilium. The protein resides in the flagellum. The enzyme catalyses a ribonucleoside 5'-phosphate + ATP = a ribonucleoside 5'-diphosphate + ADP. The catalysed reaction is AMP + ATP = 2 ADP. It catalyses the reaction GTP + AMP = GDP + ADP. It carries out the reaction CMP + ATP = CDP + ADP. The enzyme catalyses GTP + CMP = CDP + GDP. The catalysed reaction is dAMP + ATP = dADP + ADP. It catalyses the reaction dCMP + ATP = dCDP + ADP. It carries out the reaction a ribonucleoside 5'-diphosphate + ATP = a ribonucleoside 5'-triphosphate + ADP. The enzyme catalyses CDP + ATP = CTP + ADP. The catalysed reaction is CDP + GTP = CTP + GDP. It catalyses the reaction GDP + ATP = GTP + ADP. It carries out the reaction UDP + ATP = UTP + ADP. The enzyme catalyses GTP + UDP = UTP + GDP. The catalysed reaction is dTDP + GTP = dTTP + GDP. It catalyses the reaction dCDP + ATP = dCTP + ADP. It carries out the reaction dCDP + GTP = dCTP + GDP. The enzyme catalyses dGDP + ATP = dGTP + ADP. The catalysed reaction is dTDP + ATP = dTTP + ADP. It catalyses the reaction dADP + GTP = dATP + GDP. In terms of biological role, broad-specificity nucleoside phosphate kinase involved in cellular nucleotide homeostasis by catalyzing nucleoside-phosphate interconversions. Similar to other adenylate kinases, preferentially catalyzes the phosphorylation of the nucleoside monophosphate AMP with ATP as phosphate donor to produce ADP. In vitro, can also catalyze the phosphorylation of CMP, dAMP and dCMP and use GTP as an alternate phosphate donor. Moreover, exhibits a diphosphate kinase activity, producing ATP, CTP, GTP, UTP, TTP, dATP, dCTP and dGTP from the corresponding diphosphate substrates with either ATP or GTP as phosphate donors. For this activity shows the following substrate preference CDP &gt; UDP &gt; ADP &gt; TDP. The chain is Adenylate kinase 9 from Homo sapiens (Human).